A 326-amino-acid polypeptide reads, in one-letter code: Putative [LysW]-lysine/[LysW]-ornithine hydrolase (326 aa).

His-66 lines the Zn(2+) pocket. The active site involves Asp-68. A Zn(2+)-binding site is contributed by Asp-90. Catalysis depends on Glu-117, which acts as the Proton acceptor. Glu-118, Glu-139, and His-297 together coordinate Zn(2+).

Belongs to the peptidase M20A family. LysK subfamily. Zn(2+) is required as a cofactor. Co(2+) serves as cofactor.

The protein resides in the cytoplasm. The enzyme catalyses [amino-group carrier protein]-C-terminal-gamma-(L-lysyl)-L-glutamate + H2O = [amino-group carrier protein]-C-terminal-L-glutamate + L-lysine. The catalysed reaction is [amino-group carrier protein]-C-terminal-gamma-(L-ornithyl)-L-glutamate + H2O = [amino-group carrier protein]-C-terminal-L-glutamate + L-ornithine. Its pathway is amino-acid biosynthesis; L-lysine biosynthesis via AAA pathway; L-lysine from L-alpha-aminoadipate (Thermus route): step 5/5. The protein operates within amino-acid biosynthesis; L-arginine biosynthesis. Catalyzes the release of L-lysine from [LysW]-gamma-L-lysine and the release of L-ornithine from [LysW]-L-ornithine. This is Putative [LysW]-lysine/[LysW]-ornithine hydrolase from Pyrococcus furiosus (strain ATCC 43587 / DSM 3638 / JCM 8422 / Vc1).